The primary structure comprises 844 residues: Meiosis-specific protein PAIR3 (844 aa).

Disordered stretches follow at residues 41–389 (TSSV…RERR), 418–506 (KLSS…RFSD), 532–604 (DDLF…QISI), and 616–669 (WLSD…EPEK). Positions 106–120 (QPDDNAIEQTGTFSF) are enriched in polar residues. 2 stretches are compositionally biased toward basic and acidic residues: residues 122-134 (TRRE…DQLD) and 145-164 (RQVE…RMKL). Polar residues-rich tracts occupy residues 191–208 (QPKS…QKVF) and 218–229 (TPAQFNSQTANK). 2 stretches are compositionally biased toward basic and acidic residues: residues 256-270 (RKKE…DKSG) and 324-363 (AKVE…KGEK). 2 stretches are compositionally biased toward polar residues: residues 364–382 (TNSF…SCSR) and 420–440 (SSPQ…SPQQ). Over residues 441 to 456 (KENDNTHIPEASDRTA) the composition is skewed to basic and acidic residues. The span at 459–473 (NSFNSTPSPAANPSP) shows a compositional bias: low complexity. The span at 545-554 (RSRSTSFTSD) shows a compositional bias: polar residues. Over residues 616 to 640 (WLSDVDSPDKSSIEHLGRKSHLKEG) the composition is skewed to basic and acidic residues. Positions 646 to 661 (QLTSPTHFATSGTQET) are enriched in polar residues. The stretch at 731–765 (VNAGKSKRKRLESTFEEQQEKLRILHEKFKEEVNQ) forms a coiled coil.

Expressed in pollen mother cells and the ovule tissues during meiosis.

The protein resides in the chromosome. Its subcellular location is the nucleus. Functionally, plays a crucial role in homologous chromosome pairing and synapsis in meiosis. Does not seem required for cytokinesis. Is essential for meiotic bouquet formation, homologous chromosome pairing and normal recombination, and synaptonemal complex (SC) assembly. Required for the proper association of PAIR2 with chromosomes. This is Meiosis-specific protein PAIR3 from Oryza sativa subsp. japonica (Rice).